A 242-amino-acid chain; its full sequence is ATP synthase subunit a (242 aa).

6 consecutive transmembrane segments (helical) span residues 29-49 (SSIYMLLASILALTYFYLAFY), 84-104 (FIPLVFSLFIFVLFSNLLGMT), 114-134 (IIVTFTLAIIVFLTVTIVGFV), 140-160 (FLTLFLPYGTPLWLAPLMIVI), 181-201 (MAGHVLLKVIAGFTVSLMIYL), and 203-223 (FLPIPIIVILIGFEIFVAILQ).

It belongs to the ATPase A chain family. In terms of assembly, F-type ATPases have 2 components, CF(1) - the catalytic core - and CF(0) - the membrane proton channel. CF(1) has five subunits: alpha(3), beta(3), gamma(1), delta(1), epsilon(1). CF(0) has three main subunits: a(1), b(2) and c(9-12). The alpha and beta chains form an alternating ring which encloses part of the gamma chain. CF(1) is attached to CF(0) by a central stalk formed by the gamma and epsilon chains, while a peripheral stalk is formed by the delta and b chains.

The protein localises to the cell inner membrane. Key component of the proton channel; it plays a direct role in the translocation of protons across the membrane. In Rickettsia akari (strain Hartford), this protein is ATP synthase subunit a.